The chain runs to 157 residues: Endoribonuclease YbeY (157 aa).

Positions 114, 118, and 124 each coordinate Zn(2+).

The protein belongs to the endoribonuclease YbeY family. Zn(2+) is required as a cofactor.

It is found in the cytoplasm. Single strand-specific metallo-endoribonuclease involved in late-stage 70S ribosome quality control and in maturation of the 3' terminus of the 16S rRNA. The protein is Endoribonuclease YbeY of Salmonella dublin (strain CT_02021853).